The chain runs to 386 residues: 2,3-diketo-5-methylthiopentyl-1-phosphate enolase (386 aa).

Lys85 (proton acceptor) is an active-site residue. Substrate contacts are provided by residues Lys131, 157–160 (KDDE), His248, Gly316, and 338–339 (GT). Positions 157, 159, and 160 each coordinate Mg(2+). An N6-carboxylysine modification is found at Lys157.

Belongs to the RuBisCO large chain family. Type IV subfamily. Homodimer. Requires Mg(2+) as cofactor.

It carries out the reaction 5-methylsulfanyl-2,3-dioxopentyl phosphate = 2-hydroxy-5-methylsulfanyl-3-oxopent-1-enyl phosphate. It participates in amino-acid biosynthesis; L-methionine biosynthesis via salvage pathway; L-methionine from S-methyl-5-thio-alpha-D-ribose 1-phosphate: step 3/6. In terms of biological role, catalyzes the enolization of 2,3-diketo-5-methylthiopentyl-1-phosphate (DK-MTP-1-P) into 2-hydroxy-3-keto-5-methylthiopentenyl-1-phosphate (HK-MTPenyl-1-P). This is 2,3-diketo-5-methylthiopentyl-1-phosphate enolase from Microcystis aeruginosa (strain NIES-843 / IAM M-2473).